A 964-amino-acid polypeptide reads, in one-letter code: Translation initiation factor IF-2 (964 aa).

The disordered stretch occupies residues 35-353 (ASSTIEPPVV…RQKRNEYESM (319 aa)). The span at 64–108 (KPTPAKPAAKPGAPAPKPGTAQKPTAPTPGAVAAPKPGTAAAKPT) shows a compositional bias: low complexity. Residues 124 to 133 (PAKPTAPKPA) are compositionally biased toward pro residues. The segment covering 145 to 155 (AAKKAAEDKAT) has biased composition (basic and acidic residues). Pro residues predominate over residues 166–178 (NAMPRPMAKPGPK). The span at 220–233 (PRPQGGQRSGAPRD) shows a compositional bias: low complexity. 2 stretches are compositionally biased toward gly residues: residues 234–252 (GQGGPRGQRPGPGSGGPRP) and 290–333 (GKGG…GRPG). Residues 337–346 (RRGRKSKRQK) show a composition bias toward basic residues. Residues 459–631 (KRPPVVTVMG…VCLTADAELD (173 aa)) form the tr-type G domain. Residues 468-475 (GHVDHGKT) are G1. Residue 468–475 (GHVDHGKT) coordinates GTP. A G2 region spans residues 493-497 (GITQG). The tract at residues 518–521 (DTPG) is G3. GTP-binding positions include 518 to 522 (DTPGH) and 572 to 575 (NKID). Positions 572–575 (NKID) are G4. A G5 region spans residues 608–610 (SAK).

Belongs to the TRAFAC class translation factor GTPase superfamily. Classic translation factor GTPase family. IF-2 subfamily.

The protein resides in the cytoplasm. Functionally, one of the essential components for the initiation of protein synthesis. Protects formylmethionyl-tRNA from spontaneous hydrolysis and promotes its binding to the 30S ribosomal subunits. Also involved in the hydrolysis of GTP during the formation of the 70S ribosomal complex. The chain is Translation initiation factor IF-2 from Corynebacterium efficiens (strain DSM 44549 / YS-314 / AJ 12310 / JCM 11189 / NBRC 100395).